Here is a 402-residue protein sequence, read N- to C-terminus: 5-methylphenazine-1-carboxylate 1-monooxygenase (402 aa).

Residues 14–15 (IG), 35–36 (ES), 43–45 (LGV), Arg-106, Val-132, Arg-191, and Asp-310 contribute to the FAD site. The span at 368 to 385 (REKEEWAAASRPKTEKSA) shows a compositional bias: basic and acidic residues. Residues 368–402 (REKEEWAAASRPKTEKSAALEAITGSYRNQVERPR) are disordered.

Monomer in solution. Probably interacts transiently with PhzM. It depends on FAD as a cofactor.

It carries out the reaction 5-methyl-phenazine-1-carboxylate + NADH + O2 + 2 H(+) = pyocyanin + CO2 + NAD(+) + H2O. It functions in the pathway secondary metabolite biosynthesis; pyocyanine biosynthesis. Functionally, involved in the biosynthesis of pyocyanine, a blue-pigmented phenazine derivative, which plays a role in virulence. Catalyzes the oxidative decarboxylation of 5-methylphenazine-1-carboxylate (5-methyl-PCA) to pyocyanine. Can also act on phenazine-1-carboxylate (PCA), converting it into 1-hydroxyphenazine (1-HP). However, PCA is a poor substrate. The sequence is that of 5-methylphenazine-1-carboxylate 1-monooxygenase from Pseudomonas aeruginosa (strain ATCC 15692 / DSM 22644 / CIP 104116 / JCM 14847 / LMG 12228 / 1C / PRS 101 / PAO1).